An 85-amino-acid polypeptide reads, in one-letter code: Cloacin immunity protein (85 aa).

Lysine 12 carries the post-translational modification N6-methyllysine.

This sequence belongs to the cloacin immunity protein family.

This protein complexes with cloacin protein in equimolar amounts and inhibits it by binding with high affinity to the C-terminal catalytic domain of cloacin. The protein is Cloacin immunity protein (cim) of Escherichia coli.